We begin with the raw amino-acid sequence, 143 residues long: MFLGTHSPRLDEKGRIILPAKFREELADGLVLTRGQERCIYVFSQKEFERIHESMREAPLSSKQARDYIRVFLSGASDEVPDKQGRVTIPPALRAYAGLGRELAVIGAGTRAEIWDADAWNEYLNEKEAAFSETDDDNLPGFI.

SpoVT-AbrB domains lie at 5–47 (THSP…SQKE) and 76–119 (ASDE…DADA).

This sequence belongs to the MraZ family. Forms oligomers.

It localises to the cytoplasm. It is found in the nucleoid. This chain is Transcriptional regulator MraZ, found in Paenarthrobacter aurescens (strain TC1).